We begin with the raw amino-acid sequence, 346 residues long: SUMO-activating enzyme subunit 1 (346 aa).

Met-1 is modified (N-acetylmethionine). Val-2 is modified (N-acetylvaline; in SUMO-activating enzyme subunit 1, N-terminally processed). Ser-12 is subject to Phosphoserine. N6-acetyllysine is present on Lys-198.

The protein belongs to the ubiquitin-activating E1 family. As to quaternary structure, heterodimer of SAE1 and UBA2/SAE2. The heterodimer corresponds to the two domains that are encoded on a single polypeptide chain in ubiquitin-activating enzyme E1. Interacts with UBE2I.

The protein localises to the nucleus. It functions in the pathway protein modification; protein sumoylation. Its function is as follows. The heterodimer acts as an E1 ligase for SUMO1, SUMO2, SUMO3, and probably SUMO4. It mediates ATP-dependent activation of SUMO proteins followed by formation of a thioester bond between a SUMO protein and a conserved active site cysteine residue on UBA2/SAE2. The polypeptide is SUMO-activating enzyme subunit 1 (SAE1) (Bos taurus (Bovine)).